The primary structure comprises 323 residues: D-alanine--D-alanine ligase (323 aa).

The 199-residue stretch at 102–300 (KQIFRAEGIP…FTELVERMLQ (199 aa)) folds into the ATP-grasp domain. Position 130 to 185 (130 to 185 (VARLGSPLVVKPSNSGSTVGISLARDEVSLAQGLALASSVSSRVFLERYIPGKEIT)) interacts with ATP. The Mg(2+) site is built by aspartate 254, glutamate 267, and asparagine 269.

It belongs to the D-alanine--D-alanine ligase family. Mg(2+) is required as a cofactor. The cofactor is Mn(2+).

The protein localises to the cytoplasm. The catalysed reaction is 2 D-alanine + ATP = D-alanyl-D-alanine + ADP + phosphate + H(+). Its pathway is cell wall biogenesis; peptidoglycan biosynthesis. Functionally, cell wall formation. This is D-alanine--D-alanine ligase from Synechococcus sp. (strain JA-3-3Ab) (Cyanobacteria bacterium Yellowstone A-Prime).